The chain runs to 232 residues: Large ribosomal subunit protein uL1 (232 aa).

It belongs to the universal ribosomal protein uL1 family. As to quaternary structure, part of the 50S ribosomal subunit.

In terms of biological role, binds directly to 23S rRNA. The L1 stalk is quite mobile in the ribosome, and is involved in E site tRNA release. Functionally, protein L1 is also a translational repressor protein, it controls the translation of the L11 operon by binding to its mRNA. This chain is Large ribosomal subunit protein uL1, found in Sinorhizobium medicae (strain WSM419) (Ensifer medicae).